The chain runs to 351 residues: Protein RecA (351 aa).

ATP is bound at residue 68–75 (GPESSGKT).

Belongs to the RecA family.

Its subcellular location is the cytoplasm. Can catalyze the hydrolysis of ATP in the presence of single-stranded DNA, the ATP-dependent uptake of single-stranded DNA by duplex DNA, and the ATP-dependent hybridization of homologous single-stranded DNAs. It interacts with LexA causing its activation and leading to its autocatalytic cleavage. This is Protein RecA from Thermotoga neapolitana (strain ATCC 49049 / DSM 4359 / NBRC 107923 / NS-E).